We begin with the raw amino-acid sequence, 673 residues long: DNA ligase (673 aa).

NAD(+) contacts are provided by residues D36–D40, S85–L86, and E116. Residue K118 is the N6-AMP-lysine intermediate of the active site. Residues R139, E176, K291, and K315 each contribute to the NAD(+) site. 4 residues coordinate Zn(2+): C409, C412, C427, and C433. The region spanning R592–R673 is the BRCT domain.

This sequence belongs to the NAD-dependent DNA ligase family. LigA subfamily. Mg(2+) is required as a cofactor. Requires Mn(2+) as cofactor.

The enzyme catalyses NAD(+) + (deoxyribonucleotide)n-3'-hydroxyl + 5'-phospho-(deoxyribonucleotide)m = (deoxyribonucleotide)n+m + AMP + beta-nicotinamide D-nucleotide.. In terms of biological role, DNA ligase that catalyzes the formation of phosphodiester linkages between 5'-phosphoryl and 3'-hydroxyl groups in double-stranded DNA using NAD as a coenzyme and as the energy source for the reaction. It is essential for DNA replication and repair of damaged DNA. The protein is DNA ligase of Alkalilimnicola ehrlichii (strain ATCC BAA-1101 / DSM 17681 / MLHE-1).